We begin with the raw amino-acid sequence, 271 residues long: ATP synthase subunit a (271 aa).

Transmembrane regions (helical) follow at residues T40–F60, L100–L120, D146–I166, L220–P240, and A242–V262.

This sequence belongs to the ATPase A chain family. As to quaternary structure, F-type ATPases have 2 components, CF(1) - the catalytic core - and CF(0) - the membrane proton channel. CF(1) has five subunits: alpha(3), beta(3), gamma(1), delta(1), epsilon(1). CF(0) has three main subunits: a(1), b(2) and c(9-12). The alpha and beta chains form an alternating ring which encloses part of the gamma chain. CF(1) is attached to CF(0) by a central stalk formed by the gamma and epsilon chains, while a peripheral stalk is formed by the delta and b chains.

It is found in the cell inner membrane. Functionally, key component of the proton channel; it plays a direct role in the translocation of protons across the membrane. The polypeptide is ATP synthase subunit a (Shigella flexneri).